Reading from the N-terminus, the 589-residue chain is MILQPSSSKSKLTSHQDHHLVPHSISLRRLLSRLDKSELVSLVTRWLDNAGPSYIPPMLSRRQPKAGQEDSVTNLTLYHAILDLNEERRCRSMDELRLLWTGPMSDPRVPKARALDRISDVDWPEGLSYAMVAELDLFYAHARQLSKTWSTVKLEYDDDVDAAGRGWERLSETQIRLRLGNELGHYFEHHIYLHPRVKPEDRNAAAVRSWTDSFSYFRIVLAPIPSDVCGTGLHILHLPRTPFLLVSGSLGRGSENREMALSAFAAAAGATTVNYAKPAAGSAAAKKLLAELNDAGEDAAGNRRTLGELRGKDPLALREILLHESGRLSSTSDASAAPAGVAGGGKARQMQFSQGGSGQGAEDGPLIAPLKRRREEDLSLLGIRPPTPPASGSERDTVSLSSASTSARPTQRRSSLTPCSQTPQETHQHAREALTTRMESQREANELFGPKPNPYDPSNDALPRVERIEYELHLPFPAMQRYNTRSLIDMDAYNSDPEKPKIKLRLEGTHVLAGLRKLVAAGMDRSTSRLDAGEGQGDDDDEEDGQAEKYEGAVKPVKLDGLPGWLTEVRGTKVVVQPSPPGDDSSRDM.

4 disordered regions span residues 328 to 365, 379 to 459, 525 to 555, and 569 to 589; these read LSST…EDGP, SLLG…DPSN, RSTS…GAVK, and VRGT…SRDM. The segment covering 398 to 425 has biased composition (polar residues); that stretch reads VSLSSASTSARPTQRRSSLTPCSQTPQE. Positions 426–445 are enriched in basic and acidic residues; it reads THQHAREALTTRMESQREAN. Residues 536 to 545 are compositionally biased toward acidic residues; that stretch reads QGDDDDEEDG.

This is an uncharacterized protein from Mycosarcoma maydis (Corn smut fungus).